Reading from the N-terminus, the 47-residue chain is Short neurotoxin D2A (47 aa).

Cystine bridges form between Cys3/Cys24 and Cys17/Cys39.

As to expression, expressed by the venom gland.

Its subcellular location is the secreted. The polypeptide is Short neurotoxin D2A (Micrurus pyrrhocryptus (Coral snake)).